A 201-amino-acid polypeptide reads, in one-letter code: Holliday junction branch migration complex subunit RuvA (201 aa).

Residues 1–64 form a domain I region; it reads MYEYIRGQFQ…EDFIGLYGFT (64 aa). A domain II region spans residues 65-143; sequence TKEELEMFKL…PDELTSEEEQ (79 aa). The segment at 144–152 is flexible linker; that stretch reads LIEGINDNS. A domain III region spans residues 153–201; the sequence is DYSFNINETLSALMALGYTEKEAQKALEKVDKTLSIENMIKESLKLLMR.

It belongs to the RuvA family. As to quaternary structure, homotetramer. Forms an RuvA(8)-RuvB(12)-Holliday junction (HJ) complex. HJ DNA is sandwiched between 2 RuvA tetramers; dsDNA enters through RuvA and exits via RuvB. An RuvB hexamer assembles on each DNA strand where it exits the tetramer. Each RuvB hexamer is contacted by two RuvA subunits (via domain III) on 2 adjacent RuvB subunits; this complex drives branch migration. In the full resolvosome a probable DNA-RuvA(4)-RuvB(12)-RuvC(2) complex forms which resolves the HJ.

It localises to the cytoplasm. Functionally, the RuvA-RuvB-RuvC complex processes Holliday junction (HJ) DNA during genetic recombination and DNA repair, while the RuvA-RuvB complex plays an important role in the rescue of blocked DNA replication forks via replication fork reversal (RFR). RuvA specifically binds to HJ cruciform DNA, conferring on it an open structure. The RuvB hexamer acts as an ATP-dependent pump, pulling dsDNA into and through the RuvAB complex. HJ branch migration allows RuvC to scan DNA until it finds its consensus sequence, where it cleaves and resolves the cruciform DNA. This is Holliday junction branch migration complex subunit RuvA from Clostridium perfringens (strain SM101 / Type A).